The primary structure comprises 154 residues: Large ribosomal subunit protein uL22c (154 aa).

This sequence belongs to the universal ribosomal protein uL22 family. As to quaternary structure, part of the 50S ribosomal subunit.

It localises to the plastid. The protein resides in the chloroplast. Functionally, this protein binds specifically to 23S rRNA. The globular domain of the protein is located near the polypeptide exit tunnel on the outside of the subunit, while an extended beta-hairpin is found that lines the wall of the exit tunnel in the center of the 70S ribosome. The sequence is that of Large ribosomal subunit protein uL22c (rpl22) from Helianthus annuus (Common sunflower).